The chain runs to 471 residues: tRNA-2-methylthio-N(6)-dimethylallyladenosine synthase (471 aa).

Positions 31–149 (LYYHIETYGC…FPQLLWEALN (119 aa)) constitute an MTTase N-terminal domain. 6 residues coordinate [4Fe-4S] cluster: Cys40, Cys76, Cys110, Cys186, Cys190, and Cys193. The Radical SAM core domain occupies 172–402 (RDSNLKAWVN…IELQNKISLE (231 aa)). Positions 405–468 (AELRGKIVEV…AWTMQGELVE (64 aa)) constitute a TRAM domain.

It belongs to the methylthiotransferase family. MiaB subfamily. In terms of assembly, monomer. The cofactor is [4Fe-4S] cluster.

The protein resides in the cytoplasm. It catalyses the reaction N(6)-dimethylallyladenosine(37) in tRNA + (sulfur carrier)-SH + AH2 + 2 S-adenosyl-L-methionine = 2-methylsulfanyl-N(6)-dimethylallyladenosine(37) in tRNA + (sulfur carrier)-H + 5'-deoxyadenosine + L-methionine + A + S-adenosyl-L-homocysteine + 2 H(+). Its function is as follows. Catalyzes the methylthiolation of N6-(dimethylallyl)adenosine (i(6)A), leading to the formation of 2-methylthio-N6-(dimethylallyl)adenosine (ms(2)i(6)A) at position 37 in tRNAs that read codons beginning with uridine. This Thermoanaerobacter pseudethanolicus (strain ATCC 33223 / 39E) (Clostridium thermohydrosulfuricum) protein is tRNA-2-methylthio-N(6)-dimethylallyladenosine synthase.